The following is a 182-amino-acid chain: Transcription termination/antitermination protein NusG (182 aa).

The 33-residue stretch at 131–163 (VGEQVRIKSGPFANQVGEVQEIETDKFKLTVLV) folds into the KOW domain.

It belongs to the NusG family.

In terms of biological role, participates in transcription elongation, termination and antitermination. The chain is Transcription termination/antitermination protein NusG from Staphylococcus aureus (strain NCTC 8325 / PS 47).